A 538-amino-acid polypeptide reads, in one-letter code: CTP synthase (538 aa).

The amidoligase domain stretch occupies residues 1 to 266 (MKTKFIFVTG…DDQVVDKLNI (266 aa)). Ser-14 lines the CTP pocket. Ser-14 contributes to the UTP binding site. ATP-binding positions include 15-20 (SIGKGL) and Asp-72. Residues Asp-72 and Glu-140 each coordinate Mg(2+). CTP is bound by residues 147–149 (DIE), 187–192 (KTKPTQ), and Lys-223. UTP is bound by residues 187 to 192 (KTKPTQ) and Lys-223. The Glutamine amidotransferase type-1 domain occupies 292-534 (HIAIVGKYVN…IAAALEHRGK (243 aa)). Gly-354 is a binding site for L-glutamine. Cys-381 acts as the Nucleophile; for glutamine hydrolysis in catalysis. L-glutamine contacts are provided by residues 382–385 (LGMQ), Glu-405, and Arg-462. Residues His-507 and Glu-509 contribute to the active site.

This sequence belongs to the CTP synthase family. As to quaternary structure, homotetramer.

The enzyme catalyses UTP + L-glutamine + ATP + H2O = CTP + L-glutamate + ADP + phosphate + 2 H(+). It carries out the reaction L-glutamine + H2O = L-glutamate + NH4(+). The catalysed reaction is UTP + NH4(+) + ATP = CTP + ADP + phosphate + 2 H(+). The protein operates within pyrimidine metabolism; CTP biosynthesis via de novo pathway; CTP from UDP: step 2/2. Its activity is regulated as follows. Allosterically activated by GTP, when glutamine is the substrate; GTP has no effect on the reaction when ammonia is the substrate. The allosteric effector GTP functions by stabilizing the protein conformation that binds the tetrahedral intermediate(s) formed during glutamine hydrolysis. Inhibited by the product CTP, via allosteric rather than competitive inhibition. In terms of biological role, catalyzes the ATP-dependent amination of UTP to CTP with either L-glutamine or ammonia as the source of nitrogen. Regulates intracellular CTP levels through interactions with the four ribonucleotide triphosphates. The chain is CTP synthase from Geobacter metallireducens (strain ATCC 53774 / DSM 7210 / GS-15).